The primary structure comprises 215 residues: HTH-type transcriptional regulator for conjugative element R391 (215 aa).

An HTH cro/C1-type domain is found at 8-61 (LNHALQLTGVTQSELARRIGIKQQSISQICSGKSARSRYTMQIAEALRVNAHWL). Positions 19 to 38 (QSELARRIGIKQQSISQICS) form a DNA-binding region, H-T-H motif.

May control the expression of the integrase and inhibit excision of the mobile element R391, and regulate the expression of other genes as well. The chain is HTH-type transcriptional regulator for conjugative element R391 from Providencia rettgeri.